Consider the following 21-residue polypeptide: 78 kDa dihydrolipoyllysine-residue acetyltransferase component of pyruvate dehydrogenase complex (21 aa).

The protein belongs to the 2-oxoacid dehydrogenase family. In terms of assembly, forms a 60-polypeptide structural core. It depends on (R)-lipoate as a cofactor.

It localises to the mitochondrion matrix. It catalyses the reaction N(6)-[(R)-dihydrolipoyl]-L-lysyl-[protein] + acetyl-CoA = N(6)-[(R)-S(8)-acetyldihydrolipoyl]-L-lysyl-[protein] + CoA. In terms of biological role, the pyruvate dehydrogenase complex catalyzes the overall conversion of pyruvate to acetyl-CoA and CO(2). It contains multiple copies of three enzymatic components: pyruvate dehydrogenase (E1), dihydrolipoamide acetyltransferase (E2) and lipoamide dehydrogenase (E3). The chain is 78 kDa dihydrolipoyllysine-residue acetyltransferase component of pyruvate dehydrogenase complex from Solanum tuberosum (Potato).